A 468-amino-acid polypeptide reads, in one-letter code: ATP synthase subunit beta (468 aa).

153 to 160 (GGAGVGKT) is a binding site for ATP.

It belongs to the ATPase alpha/beta chains family. As to quaternary structure, F-type ATPases have 2 components, CF(1) - the catalytic core - and CF(0) - the membrane proton channel. CF(1) has five subunits: alpha(3), beta(3), gamma(1), delta(1), epsilon(1). CF(0) has three main subunits: a(1), b(2) and c(9-12). The alpha and beta chains form an alternating ring which encloses part of the gamma chain. CF(1) is attached to CF(0) by a central stalk formed by the gamma and epsilon chains, while a peripheral stalk is formed by the delta and b chains.

The protein localises to the cell inner membrane. The catalysed reaction is ATP + H2O + 4 H(+)(in) = ADP + phosphate + 5 H(+)(out). Its function is as follows. Produces ATP from ADP in the presence of a proton gradient across the membrane. The catalytic sites are hosted primarily by the beta subunits. This Nautilia profundicola (strain ATCC BAA-1463 / DSM 18972 / AmH) protein is ATP synthase subunit beta.